The following is a 422-amino-acid chain: Mannosylglycerate synthase (422 aa).

Residues 7–11 (PFKEE), glutamine 66, lysine 77, aspartate 101, and 101–102 (DS) each bind GDP-alpha-D-mannose. Residues arginine 132 and 137–140 (AMIT) each bind (R)-glycerate. Leucine 164, aspartate 193, and tyrosine 221 together coordinate GDP-alpha-D-mannose.

It belongs to the glycosyltransferase 78 family.

The catalysed reaction is (R)-glycerate + GDP-alpha-D-mannose = (2R)-2-O-(alpha-D-mannosyl)-glycerate + GDP + H(+). It carries out the reaction GDP-alpha-D-glucose + (R)-glycerate = (2R)-2-O-(alpha-D-glucopyranosyl)-glycerate + GDP + H(+). Its activity is regulated as follows. Activity is not dependent on divalent cations, but it is enhanced by Mg(2+). Its function is as follows. Involved in the biosynthesis of the compatible solute alpha-D-mannosyl-glycerate (MG). Catalyzes the condensation of GDP-alpha-D-mannose (GDP-Man) with D-glycerate to produce alpha-D-mannosyl-glycerate. Can also use GDP-alpha-D-glucose (GDP-Glc) as sugar donor to produce alpha-D-glucopyranosyl-glycerate (GG). The protein is Mannosylglycerate synthase of Selaginella moellendorffii (Spikemoss).